Here is a 370-residue protein sequence, read N- to C-terminus: Phospho-N-acetylmuramoyl-pentapeptide-transferase (370 aa).

Transmembrane regions (helical) follow at residues 15-35 (PLEGKVSAGVLAVVVYAAAFA), 44-64 (LLSLPLLIATLIAAIVTWWGV), 93-113 (MGGLLVVPVGVIVGGLISWSG), 115-135 (AAEQLLAVAFITLAYMVVGGI), 155-175 (LLLQALAAVIFLIWAGMRGWI), 183-203 (FDINLPLNWLIWPLAVFVFLA), 213-233 (GLDGLAAGCGALVFTGMALQL), 240-260 (GDPSLAGFCMAMAGCWIGFLV), 268-288 (VFMGDTGSLAMGGALTAVALL), 296-316 (LIMGGIFLAESLSVIIQVWVF), and 347-367 (QLVVPGFWLATVFLVLIGIFF).

Belongs to the glycosyltransferase 4 family. MraY subfamily. Mg(2+) is required as a cofactor.

The protein localises to the cell inner membrane. The catalysed reaction is UDP-N-acetyl-alpha-D-muramoyl-L-alanyl-gamma-D-glutamyl-meso-2,6-diaminopimeloyl-D-alanyl-D-alanine + di-trans,octa-cis-undecaprenyl phosphate = di-trans,octa-cis-undecaprenyl diphospho-N-acetyl-alpha-D-muramoyl-L-alanyl-D-glutamyl-meso-2,6-diaminopimeloyl-D-alanyl-D-alanine + UMP. It functions in the pathway cell wall biogenesis; peptidoglycan biosynthesis. Its function is as follows. Catalyzes the initial step of the lipid cycle reactions in the biosynthesis of the cell wall peptidoglycan: transfers peptidoglycan precursor phospho-MurNAc-pentapeptide from UDP-MurNAc-pentapeptide onto the lipid carrier undecaprenyl phosphate, yielding undecaprenyl-pyrophosphoryl-MurNAc-pentapeptide, known as lipid I. The polypeptide is Phospho-N-acetylmuramoyl-pentapeptide-transferase (Synechococcus sp. (strain CC9311)).